The sequence spans 434 residues: Enolase (434 aa).

Residue Gln167 coordinates (2R)-2-phosphoglycerate. The Proton donor role is filled by Glu209. Residues Asp246, Glu291, and Asp318 each contribute to the Mg(2+) site. Residues Lys343, Arg372, Ser373, and Lys394 each coordinate (2R)-2-phosphoglycerate. The Proton acceptor role is filled by Lys343.

Belongs to the enolase family. As to quaternary structure, component of the RNA degradosome, a multiprotein complex involved in RNA processing and mRNA degradation. Mg(2+) serves as cofactor.

The protein localises to the cytoplasm. It is found in the secreted. The protein resides in the cell surface. The catalysed reaction is (2R)-2-phosphoglycerate = phosphoenolpyruvate + H2O. Its pathway is carbohydrate degradation; glycolysis; pyruvate from D-glyceraldehyde 3-phosphate: step 4/5. Catalyzes the reversible conversion of 2-phosphoglycerate (2-PG) into phosphoenolpyruvate (PEP). It is essential for the degradation of carbohydrates via glycolysis. The polypeptide is Enolase (Buchnera aphidicola subsp. Acyrthosiphon pisum (strain 5A)).